We begin with the raw amino-acid sequence, 137 residues long: Small ribosomal subunit protein uS12 (137 aa).

Residues 1–57 (MPTINQLIRKGRKSKGSKSNSPALNFGYNSYKKVQTNNSAPQKRGVATRVGTMTPKK) are disordered. The segment covering 32 to 41 (KKVQTNNSAP) has biased composition (polar residues). Residue Asp102 is modified to 3-methylthioaspartic acid.

The protein belongs to the universal ribosomal protein uS12 family. As to quaternary structure, part of the 30S ribosomal subunit. Contacts proteins S8 and S17. May interact with IF1 in the 30S initiation complex.

With S4 and S5 plays an important role in translational accuracy. Functionally, interacts with and stabilizes bases of the 16S rRNA that are involved in tRNA selection in the A site and with the mRNA backbone. Located at the interface of the 30S and 50S subunits, it traverses the body of the 30S subunit contacting proteins on the other side and probably holding the rRNA structure together. The combined cluster of proteins S8, S12 and S17 appears to hold together the shoulder and platform of the 30S subunit. This is Small ribosomal subunit protein uS12 from Ligilactobacillus salivarius (strain UCC118) (Lactobacillus salivarius).